The chain runs to 137 residues: Proofreading thioesterase EntH (137 aa).

Glu63 (nucleophile or proton acceptor) is an active-site residue.

It belongs to the thioesterase PaaI family. In terms of assembly, homotetramer. Dimer of dimers. Interacts specifically with the aryl carrier protein (ArCP) domain of EntB.

The protein localises to the cytoplasm. It participates in siderophore biosynthesis; enterobactin biosynthesis. Its function is as follows. Required for optimal enterobactin synthesis. Acts as a proofreading enzyme that prevents EntB misacylation by hydrolyzing the thioester bound existing between EntB and wrongly charged molecules. This is Proofreading thioesterase EntH from Cronobacter sakazakii (strain ATCC BAA-894) (Enterobacter sakazakii).